Consider the following 464-residue polypeptide: Bifunctional protein GlmU (464 aa).

The interval Met1–Arg232 is pyrophosphorylase. UDP-N-acetyl-alpha-D-glucosamine is bound by residues Leu11–Gly14, Lys25, Gln76, and Gly81–Thr82. Asp106 is a binding site for Mg(2+). UDP-N-acetyl-alpha-D-glucosamine contacts are provided by Gly143, Glu157, Asn172, and Asn230. Asn230 serves as a coordination point for Mg(2+). Positions Val233–Ala253 are linker. Residues Gly254–Asp464 form an N-acetyltransferase region. 2 residues coordinate UDP-N-acetyl-alpha-D-glucosamine: Arg336 and Lys354. His366 functions as the Proton acceptor in the catalytic mechanism. The UDP-N-acetyl-alpha-D-glucosamine site is built by Tyr369 and Asn380. Acetyl-CoA-binding positions include Asn389 to Tyr390, Ser408, Ala426, and Arg443.

The protein in the N-terminal section; belongs to the N-acetylglucosamine-1-phosphate uridyltransferase family. This sequence in the C-terminal section; belongs to the transferase hexapeptide repeat family. As to quaternary structure, homotrimer. Requires Mg(2+) as cofactor.

The protein resides in the cytoplasm. It carries out the reaction alpha-D-glucosamine 1-phosphate + acetyl-CoA = N-acetyl-alpha-D-glucosamine 1-phosphate + CoA + H(+). The catalysed reaction is N-acetyl-alpha-D-glucosamine 1-phosphate + UTP + H(+) = UDP-N-acetyl-alpha-D-glucosamine + diphosphate. It participates in nucleotide-sugar biosynthesis; UDP-N-acetyl-alpha-D-glucosamine biosynthesis; N-acetyl-alpha-D-glucosamine 1-phosphate from alpha-D-glucosamine 6-phosphate (route II): step 2/2. The protein operates within nucleotide-sugar biosynthesis; UDP-N-acetyl-alpha-D-glucosamine biosynthesis; UDP-N-acetyl-alpha-D-glucosamine from N-acetyl-alpha-D-glucosamine 1-phosphate: step 1/1. Its pathway is bacterial outer membrane biogenesis; LPS lipid A biosynthesis. Its function is as follows. Catalyzes the last two sequential reactions in the de novo biosynthetic pathway for UDP-N-acetylglucosamine (UDP-GlcNAc). The C-terminal domain catalyzes the transfer of acetyl group from acetyl coenzyme A to glucosamine-1-phosphate (GlcN-1-P) to produce N-acetylglucosamine-1-phosphate (GlcNAc-1-P), which is converted into UDP-GlcNAc by the transfer of uridine 5-monophosphate (from uridine 5-triphosphate), a reaction catalyzed by the N-terminal domain. In Syntrophotalea carbinolica (strain DSM 2380 / NBRC 103641 / GraBd1) (Pelobacter carbinolicus), this protein is Bifunctional protein GlmU.